Consider the following 358-residue polypeptide: Phenylalanine--tRNA ligase alpha subunit (358 aa).

Glutamate 258 serves as a coordination point for Mg(2+).

Belongs to the class-II aminoacyl-tRNA synthetase family. Phe-tRNA synthetase alpha subunit type 1 subfamily. Tetramer of two alpha and two beta subunits. Mg(2+) serves as cofactor.

It is found in the cytoplasm. The enzyme catalyses tRNA(Phe) + L-phenylalanine + ATP = L-phenylalanyl-tRNA(Phe) + AMP + diphosphate + H(+). The sequence is that of Phenylalanine--tRNA ligase alpha subunit from Rhodospirillum rubrum (strain ATCC 11170 / ATH 1.1.1 / DSM 467 / LMG 4362 / NCIMB 8255 / S1).